The sequence spans 201 residues: Potassium-transporting ATPase KdpC subunit (201 aa).

A helical membrane pass occupies residues 12–34 (LLALTMITGLAYPLAVTGLATVL). The interval 69–102 (RPSATVAPDPADSSKTVSAPYNAANSGGSNLGPT) is disordered. Residues 81–101 (SSKTVSAPYNAANSGGSNLGP) show a composition bias toward polar residues.

It belongs to the KdpC family. In terms of assembly, the system is composed of three essential subunits: KdpA, KdpB and KdpC.

Its subcellular location is the cell inner membrane. Its function is as follows. Part of the high-affinity ATP-driven potassium transport (or Kdp) system, which catalyzes the hydrolysis of ATP coupled with the electrogenic transport of potassium into the cytoplasm. This subunit acts as a catalytic chaperone that increases the ATP-binding affinity of the ATP-hydrolyzing subunit KdpB by the formation of a transient KdpB/KdpC/ATP ternary complex. The chain is Potassium-transporting ATPase KdpC subunit from Rhodopseudomonas palustris (strain TIE-1).